A 686-amino-acid polypeptide reads, in one-letter code: Protein MxiA (686 aa).

A run of 6 helical transmembrane segments spans residues 28-52 (LIIP…ILVF), 105-129 (FVIG…FIVI), 197-216 (AIAG…SVGM), 232-256 (ILTI…GFIV), 274-292 (IFGN…LAIG), and 299-315 (FFVF…LFYY).

This sequence belongs to the FHIPEP (flagella/HR/invasion proteins export pore) family.

It localises to the cell inner membrane. In terms of biological role, necessary for the secretion of IPA invasins. The protein is Protein MxiA (mxiA) of Shigella flexneri.